We begin with the raw amino-acid sequence, 133 residues long: ATP synthase epsilon chain (133 aa).

It belongs to the ATPase epsilon chain family. As to quaternary structure, F-type ATPases have 2 components, CF(1) - the catalytic core - and CF(0) - the membrane proton channel. CF(1) has five subunits: alpha(3), beta(3), gamma(1), delta(1), epsilon(1). CF(0) has three main subunits: a, b and c.

The protein localises to the cell membrane. Produces ATP from ADP in the presence of a proton gradient across the membrane. The chain is ATP synthase epsilon chain from Bacillus cytotoxicus (strain DSM 22905 / CIP 110041 / 391-98 / NVH 391-98).